The chain runs to 163 residues: Protein GOLVEN 3 (163 aa).

A signal peptide spans M1–E20. Residues E21 to D141 constitute a propeptide that is removed on maturation. Position 143 is a sulfotyrosine (Y143). Positions P144–F163 are disordered. The residue at position 154 (P154) is a Hydroxyproline. Positions R158–F163 are excised as a propeptide.

Belongs to the RGF family. Binds to LRR receptor-like serine/threonine-protein kinases RGI1, RGI2 and RGI3 to trigger their dimerization with SERK proteins and subsequent signaling. As to expression, expressed in roots, specifically in the root apical meristem (RAM).

The protein localises to the secreted. Signaling peptide (root growth factor) required during root gravitropism in a PIN2-traffic dependent manner, thus influencing the formation of auxin gradients. Maintains the postembryonic root stem cell niche. The sequence is that of Protein GOLVEN 3 from Arabidopsis thaliana (Mouse-ear cress).